The primary structure comprises 346 residues: L-glyceraldehyde 3-phosphate reductase (346 aa).

Residues Trp-33, Asp-61, Tyr-66, Ser-168, Gln-193, Thr-223, Leu-225, Gln-227, Lys-233, Ser-303, Gln-307, and Asn-311 each contribute to the NADP(+) site.

The protein belongs to the shaker potassium channel beta subunit family. In terms of assembly, homotetramer. Homooctamer.

The catalysed reaction is a primary alcohol + NADP(+) = an aldehyde + NADPH + H(+). The enzyme catalyses hydroxyacetone + NADP(+) = methylglyoxal + NADPH + H(+). Aldo-keto reductase that catalyzes the stereospecific, NADPH-dependent reduction of L-glyceraldehyde 3-phosphate (L-GAP) to L-glycerol 3-phosphate (L-G3P). The physiological role of Gpr is the detoxification of L-GAP, which may be formed via non-enzymatic and/or enzymatic racemization of D-GAP. Also contributes to cellular methylglyoxal detoxification by catalyzing the NADPH-dependent conversion of methylglyoxal to acetol. However, the catalytic efficiency of methylglyoxal reductase activity is more than 2 orders of magnitude lower than the L-GAP reductase activity. In addition, exhibits activity with glyoxal and probably plays a significant role in detoxification of glyoxal in vivo. Shows broad specificity and can use aromatic aldehydes such as 4-nitrobenzaldehyde and benzaldehyde, D,L-glyceraldehyde, phenylglyoxal, isatin and the model substrate 4-nitrobenzaldehyde. This Escherichia coli (strain K12) protein is L-glyceraldehyde 3-phosphate reductase.